A 27-amino-acid polypeptide reads, in one-letter code: FAVGTESIAKTFSEALDTTKISDVLSK.

It belongs to the phosphoglycerate kinase family. In terms of assembly, monomer. It depends on Mg(2+) as a cofactor.

The enzyme catalyses (2R)-3-phosphoglycerate + ATP = (2R)-3-phospho-glyceroyl phosphate + ADP. This chain is Putative phosphoglycerate kinase, found in Pinus strobus (Eastern white pine).